We begin with the raw amino-acid sequence, 186 residues long: UPF0398 protein LCA_0919 (186 aa).

Belongs to the UPF0398 family.

This Latilactobacillus sakei subsp. sakei (strain 23K) (Lactobacillus sakei subsp. sakei) protein is UPF0398 protein LCA_0919.